A 538-amino-acid polypeptide reads, in one-letter code: Telomerase Cajal body protein 1 (538 aa).

The tract at residues 1–53 (MKTSEERLVVPDSLSSDQAPAPVPQGSPVDENTDSEPVPQPCGGDDRSQVAAD) is disordered. Ser-27 and Ser-87 each carry phosphoserine. A disordered region spans residues 92–128 (EQELSENVSLPVEDTNQPELASGEDVEGVSEEPGPVD). The span at 113–128 (SGEDVEGVSEEPGPVD) shows a compositional bias: acidic residues. 6 WD repeats span residues 154 to 194 (AHSE…YSAT), 210 to 255 (EGDT…LRAS), 260 to 301 (NHLD…RDCE), 311 to 352 (GQSG…ALLG), 353 to 393 (GHQG…HLLW), and 399 to 438 (VTTN…GDSS). 2 disordered regions span residues 471 to 491 (QRMF…GDLP) and 509 to 538 (CGGG…DGLI). Thr-478 carries the post-translational modification Phosphothreonine. Ser-480 carries the phosphoserine modification. The segment covering 529–538 (RAEGCGDGLI) has biased composition (gly residues).

This sequence belongs to the TCAB1 family. Component of the telomerase holoenzyme complex composed of one molecule of TERT, one molecule of WRAP53/TCAB1, two molecules of H/ACA ribonucleoprotein complex subunits DKC1, NOP10, NHP2 and GAR1, and a telomerase RNA template component (TERC). The telomerase holoenzyme complex is associated with TEP1, SMG6/EST1A and POT1. Interacts with the chaperonin-containing T-complex (TRiC) complex; which mediates the folding of WRAP53/TCAB1. Interacts with COIL. Interacts with SMN1. Interacts with RNF8. Interacts with histone H2AX. Preferentially expressed in testis.

Its subcellular location is the nucleus. It localises to the cajal body. The protein resides in the chromosome. It is found in the telomere. RNA chaperone that plays a key role in telomere maintenance and RNA localization to Cajal bodies. Specifically recognizes and binds the Cajal body box (CAB box) present in both small Cajal body RNAs (scaRNAs) and telomerase RNA template component (TERC). Essential component of the telomerase holoenzyme complex, a ribonucleoprotein complex essential for the replication of chromosome termini that elongates telomeres in most eukaryotes. In the telomerase holoenzyme complex, required to stimulate the catalytic activity of the complex. Acts by specifically binding the CAB box of the TERC RNA and controlling the folding of the CR4/CR5 region of the TERC RNA, a critical step for telomerase activity. In addition, also controls telomerase holoenzyme complex localization to Cajal body. During S phase, required for delivery of TERC to telomeres during S phase and for telomerase activity. In addition to its role in telomere maintenance, also required for Cajal body formation, probably by mediating localization of scaRNAs to Cajal bodies. Also plays a role in DNA repair: relocalizes to sites of DNA double-strand breaks in response to DNA damage and promotes the repair of DNA double-strand breaks. Acts by recruiting the ubiquitin ligase RNF8 to DNA breaks and promote both homologous recombination (HR) and non-homologous end joining (NHEJ). This chain is Telomerase Cajal body protein 1, found in Mesocricetus auratus (Golden hamster).